A 188-amino-acid polypeptide reads, in one-letter code: Putative manganese efflux pump MntP (188 aa).

6 helical membrane passes run 3–23, 41–61, 66–86, 107–129, 143–163, and 168–188; these read ITAT…ASIG, LIFG…GMLA, LEWN…RMII, LLVT…LAFL, ATLI…PLLG, and ILGG…HFHG.

This sequence belongs to the MntP (TC 9.B.29) family.

The protein resides in the cell inner membrane. Probably functions as a manganese efflux pump. This is Putative manganese efflux pump MntP from Citrobacter koseri (strain ATCC BAA-895 / CDC 4225-83 / SGSC4696).